A 240-amino-acid polypeptide reads, in one-letter code: Probable transcriptional regulatory protein HPG27_148 (240 aa).

Belongs to the TACO1 family.

It localises to the cytoplasm. In Helicobacter pylori (strain G27), this protein is Probable transcriptional regulatory protein HPG27_148.